Here is a 395-residue protein sequence, read N- to C-terminus: Glyceraldehyde-3-phosphate dehydrogenase, testis-specific (395 aa).

Positions methionine 1 to valine 60 are testis-specific N-terminal extension. The segment at glutamine 19–lysine 59 is disordered. Pro residues-rich tracts occupy residues glutamate 31 to glutamate 41 and proline 48 to proline 57. NAD(+) is bound by residues arginine 72–isoleucine 73, aspartate 93, and lysine 138. D-glyceraldehyde 3-phosphate is bound by residues serine 210–threonine 212, threonine 241, threonine 270–glycine 271, and arginine 293. The Nucleophile role is filled by cysteine 211. Position 375 (asparagine 375) interacts with NAD(+).

It belongs to the glyceraldehyde-3-phosphate dehydrogenase family. In terms of assembly, homotetramer.

It localises to the cytoplasm. The catalysed reaction is D-glyceraldehyde 3-phosphate + phosphate + NAD(+) = (2R)-3-phospho-glyceroyl phosphate + NADH + H(+). The protein operates within carbohydrate degradation; glycolysis; pyruvate from D-glyceraldehyde 3-phosphate: step 1/5. In terms of biological role, may play an important role in regulating the switch between different pathways for energy production during spermiogenesis and in the spermatozoon. Required for sperm motility and male fertility. The sequence is that of Glyceraldehyde-3-phosphate dehydrogenase, testis-specific (GAPDHS) from Bos taurus (Bovine).